The following is a 137-amino-acid chain: Prostate and testis expressed protein 13 (137 aa).

The signal sequence occupies residues 1 to 20 (MFQKLLLSVFIILLMDVGER). Residues 28–114 (RHCNLCSHYD…CIDRNYCNDG (87 aa)) form the UPAR/Ly6 domain. 5 cysteine pairs are disulfide-bonded: Cys-30-Cys-60, Cys-33-Cys-41, Cys-48-Cys-84, Cys-87-Cys-104, and Cys-105-Cys-111. N-linked (GlcNAc...) asparagine glycosylation is present at Asn-57.

The protein belongs to the PATE family. As to expression, strongly expressed in the epididymis, including the initial segment, caput, corpus and cauda regions. Weakly expressed in prostate.

It localises to the secreted. The sequence is that of Prostate and testis expressed protein 13 from Mus musculus (Mouse).